The primary structure comprises 184 residues: NADH-quinone oxidoreductase subunit B (184 aa).

[4Fe-4S] cluster-binding residues include C37, C38, C103, and C132.

It belongs to the complex I 20 kDa subunit family. As to quaternary structure, NDH-1 is composed of 14 different subunits. Subunits NuoB, C, D, E, F, and G constitute the peripheral sector of the complex. [4Fe-4S] cluster is required as a cofactor.

Its subcellular location is the cell membrane. It carries out the reaction a quinone + NADH + 5 H(+)(in) = a quinol + NAD(+) + 4 H(+)(out). Functionally, NDH-1 shuttles electrons from NADH, via FMN and iron-sulfur (Fe-S) centers, to quinones in the respiratory chain. The immediate electron acceptor for the enzyme in this species is believed to be a menaquinone. Couples the redox reaction to proton translocation (for every two electrons transferred, four hydrogen ions are translocated across the cytoplasmic membrane), and thus conserves the redox energy in a proton gradient. This Mycobacteroides abscessus (strain ATCC 19977 / DSM 44196 / CCUG 20993 / CIP 104536 / JCM 13569 / NCTC 13031 / TMC 1543 / L948) (Mycobacterium abscessus) protein is NADH-quinone oxidoreductase subunit B.